Here is a 403-residue protein sequence, read N- to C-terminus: Serine/threonine transporter SstT (403 aa).

9 helical membrane passes run 14 to 34 (VTQIVIGLLAGIALALLAPAI), 44 to 64 (VFVSALKAVAPVLVFILVMAS), 79 to 99 (ILWLYLLGTFAAAVVAVFASM), 138 to 158 (ALLNANFIGVLTWAIGLGVAL), 175 to 195 (GVTLIVRVVIRFAPLGIFGLV), 214 to 234 (LAVLIGCMLFVALVMNPLIVF), 295 to 315 (MAGAAITITVLTLAAVHTLGI), 327 to 347 (VVAAVCACGASGVAGGSLLLI), and 353 to 373 (LFGIPSEIAMQVVAVGFIIGV).

It belongs to the dicarboxylate/amino acid:cation symporter (DAACS) (TC 2.A.23) family.

It is found in the cell inner membrane. The enzyme catalyses L-serine(in) + Na(+)(in) = L-serine(out) + Na(+)(out). It catalyses the reaction L-threonine(in) + Na(+)(in) = L-threonine(out) + Na(+)(out). In terms of biological role, involved in the import of serine and threonine into the cell, with the concomitant import of sodium (symport system). In Pseudomonas putida (strain ATCC 47054 / DSM 6125 / CFBP 8728 / NCIMB 11950 / KT2440), this protein is Serine/threonine transporter SstT.